The primary structure comprises 73 residues: Ferredoxin-thioredoxin reductase, variable chain (73 aa).

Positions 43–46 (NGKP) are interaction with ferredoxin.

Belongs to the ferredoxin thioredoxin reductase alpha subunit family. Heterodimer of subunit A (variable subunit) and subunit B (catalytic subunit). Heterodimeric FTR forms a complex with ferredoxin and thioredoxin.

Variable subunit of the ferredoxin-thioredoxin reductase (FTR), which catalyzes the two-electron reduction of thioredoxins by the electrons provided by reduced ferredoxin. The protein is Ferredoxin-thioredoxin reductase, variable chain (ftrV) of Synechococcus sp. (strain ATCC 27144 / PCC 6301 / SAUG 1402/1) (Anacystis nidulans).